Here is a 358-residue protein sequence, read N- to C-terminus: Putative UDP-kanosamine synthase oxidoreductase subunit (358 aa).

Interacts with RifK.

The catalysed reaction is UDP-alpha-D-glucose + NAD(+) = UDP-3-oxo-alpha-D-glucose + NADH + H(+). It participates in antibiotic biosynthesis; rifamycin B biosynthesis. Functionally, in a complex with RifK, RifL may catalyze the oxidation of UDP-glucose to UDP-3-keto-D-glucose, which would then be used by RifK to produce UDP-kanosamine. Is not able to use dTDP-glucose as substrate. The sequence is that of Putative UDP-kanosamine synthase oxidoreductase subunit (rifL) from Amycolatopsis mediterranei (strain S699) (Nocardia mediterranei).